The following is a 1067-amino-acid chain: Myocardin-related transcription factor B (1067 aa).

RPEL repeat units lie at residues 46-71, 90-115, and 134-159; these read EVLQ…PPLK, NFLK…EETL, and DDLN…PVDL. 2 disordered regions span residues 175-223 and 249-286; these read NLDT…NTTI and PLSC…PRVK. Polar residues-rich tracts occupy residues 193–203 and 212–223; these read QPASQESQGSA and SDSSSPVSNTTI. A compositionally biased stretch (basic and acidic residues) spans 268–283; it reads KHTEKPRSKKSKDPKP. In terms of domain architecture, SAP spans 390–424; that stretch reads LDDMKVAELKMELKLRGLPVSGTKMDLIERLKPFQ. The stretch at 540–594 forms a coiled coil; sequence GNTPNVELDAVEKDRKLQEKEKQIEELKRKLEQEQKLVEVLKKQLELEKRGQQQQ. Residues 799–819 show a composition bias toward polar residues; the sequence is ISTSAQPQRSTQLTAVQNGPT. The segment at 799–829 is disordered; the sequence is ISTSAQPQRSTQLTAVQNGPTSLHEKSSTPP.

As to quaternary structure, interacts with SRF.

It localises to the nucleus. Its function is as follows. Poor transcriptional factor which uses the canonical single or multiple CArG boxes DNA sequence. Acts as a cofactor of serum response factor (SRF) with the potential to modulate SRF target genes. The chain is Myocardin-related transcription factor B (mrtfb) from Xenopus laevis (African clawed frog).